The chain runs to 319 residues: Ribonucleoside-diphosphate reductase small chain (319 aa).

The Fe cation site is built by aspartate 70, glutamate 101, and histidine 104. Tyrosine 108 is a catalytic residue. Positions 163, 197, and 200 each coordinate Fe cation. The segment at 313–319 is interaction with R1; it reads FSLDVDF.

This sequence belongs to the ribonucleoside diphosphate reductase small chain family. As to quaternary structure, interacts with RNR1/OPG080 subunit. Can interact with host RNR1 supunit. It depends on Fe cation as a cofactor.

It carries out the reaction a 2'-deoxyribonucleoside 5'-diphosphate + [thioredoxin]-disulfide + H2O = a ribonucleoside 5'-diphosphate + [thioredoxin]-dithiol. Functionally, ribonucleoside-diphosphate reductase holoenzyme provides the precursors necessary for viral DNA synthesis. Allows virus growth in non-dividing cells. Catalyzes the biosynthesis of deoxyribonucleotides from the corresponding ribonucleotides. This is Ribonucleoside-diphosphate reductase small chain (OPG048) from Bos taurus (Bovine).